The primary structure comprises 146 residues: Kappa-casein (146 aa).

3 O-linked (GalNAc...) threonine glycosylation sites follow: Thr-107, Thr-112, and Thr-118. Ser-143 carries the phosphoserine modification.

This sequence belongs to the kappa-casein family. As to expression, mammary gland specific. Secreted in milk.

Its subcellular location is the secreted. Kappa-casein stabilizes micelle formation, preventing casein precipitation in milk. The sequence is that of Kappa-casein (CSN3) from Dicotyles tajacu (Collared peccary).